The chain runs to 372 residues: F-box/kelch-repeat protein At5g48990 (372 aa).

An F-box domain is found at S14 to R60. The Kelch repeat unit spans residues R176–Y222.

The sequence is that of F-box/kelch-repeat protein At5g48990 from Arabidopsis thaliana (Mouse-ear cress).